The following is an 88-amino-acid chain: Phosphocarrier protein HPr (88 aa).

The region spanning 1 to 88 (MKTQQFTVID…TLLTEMGLAQ (88 aa)) is the HPr domain. H15 acts as the Pros-phosphohistidine intermediate in catalysis. Position 46 is a phosphoserine; by HPrK/P (S46).

This sequence belongs to the HPr family.

It is found in the cytoplasm. Its activity is regulated as follows. Phosphorylation on Ser-46 inhibits the phosphoryl transfer from enzyme I to HPr. Its function is as follows. General (non sugar-specific) component of the phosphoenolpyruvate-dependent sugar phosphotransferase system (sugar PTS). This major carbohydrate active-transport system catalyzes the phosphorylation of incoming sugar substrates concomitantly with their translocation across the cell membrane. The phosphoryl group from phosphoenolpyruvate (PEP) is transferred to the phosphoryl carrier protein HPr by enzyme I. Phospho-HPr then transfers it to the PTS EIIA domain. Functionally, P-Ser-HPr interacts with the catabolite control protein A (CcpA), forming a complex that binds to DNA at the catabolite response elements cre, operator sites preceding a large number of catabolite-regulated genes. Thus, P-Ser-HPr is a corepressor in carbon catabolite repression (CCR), a mechanism that allows bacteria to coordinate and optimize the utilization of available carbon sources. P-Ser-HPr also plays a role in inducer exclusion, in which it probably interacts with several non-PTS permeases and inhibits their transport activity. The protein is Phosphocarrier protein HPr (ptsH) of Lysinibacillus sphaericus (Bacillus sphaericus).